Reading from the N-terminus, the 358-residue chain is E3 ubiquitin-protein ligase SIS3 (358 aa).

The signal sequence occupies residues 1 to 27 (MAMRGVDFKWYDGFFLSMLATSVIIVA). The next 3 membrane-spanning stretches (helical) occupy residues 40-60 (LHIWIVVDYTTVFIFRVFMFV), 85-105 (VVVLSVLSLLLYPFLWAWTVI), and 125-145 (GFLIWLMFSYCGLLCIAFICV). Residues 235–276 (CLICLEEFHIGHEVRGLPCAHNFHVECIDQWLRLNVKCPRCR) form an RING-type; atypical zinc finger. Residues 336-358 (TALETAENGGVPPVLTDLSPSRR) are disordered.

Expressed in roots, stems, leaves, flowers and siliques.

Its subcellular location is the membrane. The enzyme catalyses S-ubiquitinyl-[E2 ubiquitin-conjugating enzyme]-L-cysteine + [acceptor protein]-L-lysine = [E2 ubiquitin-conjugating enzyme]-L-cysteine + N(6)-ubiquitinyl-[acceptor protein]-L-lysine.. Its pathway is protein modification; protein ubiquitination. Functionally, E3 ubiquitin protein ligase that acts as a positive regulator of sugar signaling during early seedling development. Possesses E3 ligase activity in vitro. In Arabidopsis thaliana (Mouse-ear cress), this protein is E3 ubiquitin-protein ligase SIS3 (SIS3).